A 273-amino-acid polypeptide reads, in one-letter code: Small ribosomal subunit protein uS3 (273 aa).

The KH type-2 domain maps to 40–110; the sequence is IRNLFFVNYR…NLDLTINEIG (71 aa). Over residues 244–265 the composition is skewed to polar residues; that stretch reads QVLSANKLTGSDVETSSIQALT. Residues 244–273 form a disordered region; it reads QVLSANKLTGSDVETSSIQALTKPNKEDKQ.

Belongs to the universal ribosomal protein uS3 family. As to quaternary structure, part of the 30S ribosomal subunit. Forms a tight complex with proteins S10 and S14.

In terms of biological role, binds the lower part of the 30S subunit head. Binds mRNA in the 70S ribosome, positioning it for translation. This chain is Small ribosomal subunit protein uS3, found in Mycoplasma pneumoniae (strain ATCC 29342 / M129 / Subtype 1) (Mycoplasmoides pneumoniae).